We begin with the raw amino-acid sequence, 94 residues long: Putative pterin-4-alpha-carbinolamine dehydratase (94 aa).

The protein belongs to the pterin-4-alpha-carbinolamine dehydratase family.

The catalysed reaction is (4aS,6R)-4a-hydroxy-L-erythro-5,6,7,8-tetrahydrobiopterin = (6R)-L-erythro-6,7-dihydrobiopterin + H2O. This is Putative pterin-4-alpha-carbinolamine dehydratase from Koribacter versatilis (strain Ellin345).